Reading from the N-terminus, the 166-residue chain is Small ribosomal subunit protein bS18m (166 aa).

The transit peptide at 1–31 (MLGRRIFSPAPNRGFILCNLIQSNNSTRRGF) directs the protein to the mitochondrion. The disordered stretch occupies residues 29-48 (RGFSDNRKFNERNSEASSNV). Basic and acidic residues predominate over residues 30–42 (GFSDNRKFNERNS).

It belongs to the bacterial ribosomal protein bS18 family. As to quaternary structure, component of the mitochondrial small ribosomal subunit (mt-SSU). Mature yeast 74S mitochondrial ribosomes consist of a small (37S) and a large (54S) subunit. The 37S small subunit contains a 15S ribosomal RNA (15S mt-rRNA) and at least 32 different proteins. The 54S large subunit contains a 21S rRNA (21S mt-rRNA) and at least 45 different proteins.

It is found in the mitochondrion. Functionally, component of the mitochondrial ribosome (mitoribosome), a dedicated translation machinery responsible for the synthesis of mitochondrial genome-encoded proteins, including at least some of the essential transmembrane subunits of the mitochondrial respiratory chain. The mitoribosomes are attached to the mitochondrial inner membrane and translation products are cotranslationally integrated into the membrane. This is Small ribosomal subunit protein bS18m (rsm18) from Schizosaccharomyces pombe (strain 972 / ATCC 24843) (Fission yeast).